We begin with the raw amino-acid sequence, 533 residues long: MDGKSKMQAEKHLTGTLVLSVFTAVLGFFQYGYSLGVINAPQKVIEAHYGRMLGAIPMVRHATNTSRDNATITVTIPGTEAWGSSEGTLAPSAGFEDPTVSPHILTMYWSLSVSMFAVGGMVSSFTVGWIGDRLGRVKAMLVVNVLSIAGNLLMGLAKMGPSHILIIAGRAITGLYCGLSSGLVPMYVSEVSPTALRGALGTLHQLAIVTGILISQVLGLDFLLGNDELWPLLLGLSGVAALLQFFLLLLCPESPRYLYIKLGKVEEAKKSLKRLRGNCDPMKEIAEMEKEKQEAASEKRVSIGQLFSSSKYRQAVIVALMVQISQQFSGINAIFYYSTNIFQRAGVGQPVYATIGVGVVNTVFTVISVFLVEKAGRRSLFLAGLMGMLISAVAMTVGLVLLSQFAWMSYVSMVAIFLFVIFFEVGPGPIPWFIVAELFSQGPRPAAIAVAGFCNWACNFIVGMCFQYIADLCGPYVFVVFAVLLLVFFLFAYLKVPETKGKSFEEIAAAFRRKKLPAKSMTELEDLRGGEEA.

Over 1 to 17 the chain is Cytoplasmic; it reads MDGKSKMQAEKHLTGTL. Residues 18–38 traverse the membrane as a helical segment; the sequence is VLSVFTAVLGFFQYGYSLGVI. Over 39–110 the chain is Extracellular; it reads NAPQKVIEAH…SPHILTMYWS (72 aa). N-linked (GlcNAc...) asparagine glycosylation is found at Asn64 and Asn69. Residues 111–131 traverse the membrane as a helical segment; sequence LSVSMFAVGGMVSSFTVGWIG. Residues 132-136 lie on the Cytoplasmic side of the membrane; it reads DRLGR. The chain crosses the membrane as a helical span at residues 137–157; sequence VKAMLVVNVLSIAGNLLMGLA. At 158 to 163 the chain is on the extracellular side; that stretch reads KMGPSH. The chain crosses the membrane as a helical span at residues 164–184; it reads ILIIAGRAITGLYCGLSSGLV. Topologically, residues 185 to 199 are cytoplasmic; the sequence is PMYVSEVSPTALRGA. Residues 200–220 traverse the membrane as a helical segment; the sequence is LGTLHQLAIVTGILISQVLGL. Gln205 contacts D-glucose. Residues 221-229 are Extracellular-facing; that stretch reads DFLLGNDEL. Residues 230 to 250 form a helical membrane-spanning segment; it reads WPLLLGLSGVAALLQFFLLLL. Residues 251–315 are Cytoplasmic-facing; that stretch reads CPESPRYLYI…LFSSSKYRQA (65 aa). The helical transmembrane segment at 316–336 threads the bilayer; it reads VIVALMVQISQQFSGINAIFY. Residues 326–327 and Asn332 contribute to the D-glucose site; that span reads QQ. Over 337-350 the chain is Extracellular; it reads YSTNIFQRAGVGQP. The chain crosses the membrane as a helical span at residues 351-371; sequence VYATIGVGVVNTVFTVISVFL. D-glucose is bound at residue Asn361. Residues 372 to 379 are Cytoplasmic-facing; the sequence is VEKAGRRS. The chain crosses the membrane as a helical span at residues 380 to 400; the sequence is LFLAGLMGMLISAVAMTVGLV. Residues 401–413 are Extracellular-facing; that stretch reads LLSQFAWMSYVSM. A helical membrane pass occupies residues 414 to 434; that stretch reads VAIFLFVIFFEVGPGPIPWFI. Glu424 and Trp432 together coordinate D-glucose. The Cytoplasmic segment spans residues 435 to 445; it reads VAELFSQGPRP. The helical transmembrane segment at 446–466 threads the bilayer; it reads AAIAVAGFCNWACNFIVGMCF. Topologically, residues 467-471 are extracellular; the sequence is QYIAD. A helical transmembrane segment spans residues 472–492; it reads LCGPYVFVVFAVLLLVFFLFA. Residues 493–533 lie on the Cytoplasmic side of the membrane; sequence YLKVPETKGKSFEEIAAAFRRKKLPAKSMTELEDLRGGEEA.

The protein belongs to the major facilitator superfamily. Sugar transporter (TC 2.A.1.1) family. Glucose transporter subfamily.

It is found in the cell membrane. The catalysed reaction is D-glucose(out) = D-glucose(in). It catalyses the reaction D-fructose(out) = D-fructose(in). It carries out the reaction L-dehydroascorbate(out) = L-dehydroascorbate(in). The enzyme catalyses D-galactose(in) = D-galactose(out). D-glucose and maltose competitively inhibit fructose transport. D-glucose, D-fructose and maltose inhibit deoxyglucose transport. Its function is as follows. Facilitative hexose transporter that mediates the transport of glucose, fructose and galactose. Likely mediates the bidirectional transfer of glucose across the plasma membrane of hepatocytes and is responsible for uptake of glucose by the beta cells. This chain is Solute carrier family 2, facilitated glucose transporter member 2, found in Gallus gallus (Chicken).